The primary structure comprises 355 residues: Protein RecA (355 aa).

Position 67–74 (67–74 (GPESSGKT)) interacts with ATP.

It belongs to the RecA family.

The protein resides in the cytoplasm. Can catalyze the hydrolysis of ATP in the presence of single-stranded DNA, the ATP-dependent uptake of single-stranded DNA by duplex DNA, and the ATP-dependent hybridization of homologous single-stranded DNAs. It interacts with LexA causing its activation and leading to its autocatalytic cleavage. The sequence is that of Protein RecA from Shewanella halifaxensis (strain HAW-EB4).